The following is a 150-amino-acid chain: UPF0178 protein Bcen2424_1660 (150 aa).

It belongs to the UPF0178 family.

The sequence is that of UPF0178 protein Bcen2424_1660 from Burkholderia cenocepacia (strain HI2424).